A 436-amino-acid chain; its full sequence is MITAETNVFESLESNVRGYCRNWPTVFTTAKGAWLQDEDGKDYLDFFAGAGALNYGHNNPVLKQPLIDYIASDGITHGLDMSTAAKRKLLETLRDTVFAPRGLDYKVQFPGPTGANAVEAALKLARKVTGRETVLSFTNAFHGMTLGALSVTGNAAKRAGAGVPLVHAAHMPYDGYFDNTTADFQWMERVLDDTSSGFDRPAAVIVETVQGEGGINVARVEWLQHLAQLCAEREILLIVDDVQMGCGRTGPFFSFEVAGITPDIVTLSKSIGGYGLPLALVLFKPELDQWAPGEHNGTFRGNNPAFVTAQVALETFWSDGALEAATKAKGEKVATELATVAGHFPGLSTRGRGLVHGIAFEDPSQAGKVCQVAFERGLLVETSGSSDEVVKLLPPLTITDDELDQGLQILTGAIDTVCTGWGRLHHRAPAEGGERR.

Lysine 269 carries the post-translational modification N6-(pyridoxal phosphate)lysine.

It belongs to the class-III pyridoxal-phosphate-dependent aminotransferase family. It depends on pyridoxal 5'-phosphate as a cofactor.

It catalyses the reaction L-2,4-diaminobutanoate + 2-oxoglutarate = L-aspartate 4-semialdehyde + L-glutamate. It functions in the pathway amine and polyamine biosynthesis; ectoine biosynthesis; L-ectoine from L-aspartate 4-semialdehyde: step 1/3. Functionally, catalyzes reversively the conversion of L-aspartate beta-semialdehyde (ASA) to L-2,4-diaminobutyrate (DABA) by transamination with L-glutamate. The protein is Diaminobutyrate--2-oxoglutarate transaminase (ectB) of Nocardia farcinica (strain IFM 10152).